A 232-amino-acid chain; its full sequence is MSAAIWVVVPAAGRGARFGAPMPKQYLQAGGQILLAHTLDALLAHPAVAGAMVVIGPDDADWPGWSEWAGKPVLTCIGGATRAASVLAGLQALPETVRADEFVLVHDAARPNLSPADLGRLLEVGRADPVGAILAAPVRDTLKRAGDDGGIDGTEPRERLWRALTPQLFRRHQLSRALSEAATAGVEVTDEAMAMERQGQRPLLVEGSEDNFKVTTPADLDRFEFVLSRRAG.

The protein belongs to the IspD/TarI cytidylyltransferase family. IspD subfamily.

It catalyses the reaction 2-C-methyl-D-erythritol 4-phosphate + CTP + H(+) = 4-CDP-2-C-methyl-D-erythritol + diphosphate. Its pathway is isoprenoid biosynthesis; isopentenyl diphosphate biosynthesis via DXP pathway; isopentenyl diphosphate from 1-deoxy-D-xylulose 5-phosphate: step 2/6. In terms of biological role, catalyzes the formation of 4-diphosphocytidyl-2-C-methyl-D-erythritol from CTP and 2-C-methyl-D-erythritol 4-phosphate (MEP). This Stenotrophomonas maltophilia (strain R551-3) protein is 2-C-methyl-D-erythritol 4-phosphate cytidylyltransferase.